The following is a 182-amino-acid chain: Peptidoglycan L,D-endopeptidase MepK (182 aa).

Positions 1-30 (MDKFDANRRKLLALGGVALGAAILPTPAFA) form a signal peptide, tat-type signal. Positions 133, 140, and 173 each coordinate Zn(2+).

Belongs to the peptidase M15 family. Zn(2+) is required as a cofactor. In terms of processing, predicted to be exported by the Tat system. The position of the signal peptide cleavage has not been experimentally proven.

The protein operates within cell wall biogenesis; cell wall polysaccharide biosynthesis. Its function is as follows. L,D-endopeptidase that cleaves meso-diaminopimelic acid (mDAP)-mDAP cross-links in peptidoglycan. It works in conjunction with other elongation-specific D,D-endopeptidases to make space for efficient incorporation of nascent peptidoglycan strands into the sacculus and thus enable cell wall expansion. The protein is Peptidoglycan L,D-endopeptidase MepK of Escherichia coli O157:H7.